Consider the following 317-residue polypeptide: MPTEQVTLTEEMIGWRLDRALASLITRLSRERLKNLISSGCVSNSQGALVRDPAFKIKSLDCFTVDIPLPRPAHNEPQDIPLEIVFEDEHLLVVNKPAGMVVHPAAGNYDNTLVNALLYHCAGKLSGIGGVARPGIVHRIDKDTSGLLVVAKTDPAHAGLAAQFADHSINRRYRAIVDGHPSLQGHVDAPLARSSVNRQKMAIVSDGRGKRAVTHYRMITPLKNASLIECRLETGRTHQVRVHMSSIGHSLLGDPVYGRSKKAHHALLQSLAFQRQALHAAHLGFIHPISGKQVDFDAEMPQDMQLLFKMLMISNRN.

The S4 RNA-binding domain maps to tryptophan 15–glutamate 89. The active site involves aspartate 141.

It belongs to the pseudouridine synthase RluA family.

It localises to the cytoplasm. The enzyme catalyses uridine(1911/1915/1917) in 23S rRNA = pseudouridine(1911/1915/1917) in 23S rRNA. Its function is as follows. Responsible for synthesis of pseudouridine from uracil at positions 1911, 1915 and 1917 in 23S ribosomal RNA. The polypeptide is Ribosomal large subunit pseudouridine synthase D (Zymomonas mobilis subsp. mobilis (strain ATCC 31821 / ZM4 / CP4)).